Consider the following 87-residue polypeptide: Small ribosomal subunit protein bS20 (87 aa).

Positions 1–11 are enriched in basic residues; that stretch reads MANIKSAKKRA. Positions 1 to 27 are disordered; sequence MANIKSAKKRAVQSEKRRQHNASQRSM.

Belongs to the bacterial ribosomal protein bS20 family.

In terms of biological role, binds directly to 16S ribosomal RNA. The protein is Small ribosomal subunit protein bS20 of Actinobacillus succinogenes (strain ATCC 55618 / DSM 22257 / CCUG 43843 / 130Z).